The following is a 264-amino-acid chain: Energy-coupling factor transporter ATP-binding protein EcfA1 (264 aa).

One can recognise an ABC transporter domain in the interval 2-234 (IQVENLSFSY…DEFNPFLIKI (233 aa)). Residue 34–41 (GKNGSGKS) participates in ATP binding.

It belongs to the ABC transporter superfamily. Energy-coupling factor EcfA family. As to quaternary structure, forms a stable energy-coupling factor (ECF) transporter complex composed of 2 membrane-embedded substrate-binding proteins (S component), 2 ATP-binding proteins (A component) and 2 transmembrane proteins (T component).

It localises to the cell inner membrane. In terms of biological role, ATP-binding (A) component of a common energy-coupling factor (ECF) ABC-transporter complex. Unlike classic ABC transporters this ECF transporter provides the energy necessary to transport a number of different substrates. The chain is Energy-coupling factor transporter ATP-binding protein EcfA1 from Fusobacterium nucleatum subsp. nucleatum (strain ATCC 25586 / DSM 15643 / BCRC 10681 / CIP 101130 / JCM 8532 / KCTC 2640 / LMG 13131 / VPI 4355).